Reading from the N-terminus, the 711-residue chain is Early transcription factor 82 kDa subunit (711 aa).

Belongs to the poxviridae VETF large subunit family. As to quaternary structure, heterodimer of a 70 kDa and a 82 kDa subunit. Part of the early transcription complex composed of ETF, RAP94, and the DNA-directed RNA polymerase.

The protein resides in the virion. Acts with RNA polymerase to initiate transcription from early gene promoters. Is recruited by the RPO-associated protein of 94 kDa (RAP94) to form the early transcription complex, which also contains the core RNA polymerase. ETF heterodimer binds to early gene promoters. The protein is Early transcription factor 82 kDa subunit (VETFL) of Oryctolagus cuniculus (Rabbit).